A 417-amino-acid polypeptide reads, in one-letter code: Riboflavin biosynthesis protein RibBA (417 aa).

A DHBP synthase region spans residues 1–204 (MTRLDSIERA…IADLIEWRRK (204 aa)). D-ribulose 5-phosphate-binding positions include 28–29 (RE), Asp-33, 141–145 (RPGHT), and Glu-165. Glu-29 contacts Mg(2+). His-144 contributes to the Mg(2+) binding site. Positions 205 to 417 (HEKHVQRIAE…LDDHPEADGA (213 aa)) are GTP cyclohydrolase II. 259–263 (RVHSE) contributes to the GTP binding site. 3 residues coordinate Zn(2+): Cys-264, Cys-275, and Cys-277. GTP contacts are provided by residues Gln-280, 303 to 305 (EGR), and Thr-325. Residue Asp-337 is the Proton acceptor; for GTP cyclohydrolase activity of the active site. Catalysis depends on Arg-339, which acts as the Nucleophile; for GTP cyclohydrolase activity. The GTP site is built by Thr-360 and Lys-365.

This sequence in the N-terminal section; belongs to the DHBP synthase family. The protein in the C-terminal section; belongs to the GTP cyclohydrolase II family. Requires Mg(2+) as cofactor. Mn(2+) is required as a cofactor. Zn(2+) serves as cofactor.

It catalyses the reaction D-ribulose 5-phosphate = (2S)-2-hydroxy-3-oxobutyl phosphate + formate + H(+). The enzyme catalyses GTP + 4 H2O = 2,5-diamino-6-hydroxy-4-(5-phosphoribosylamino)-pyrimidine + formate + 2 phosphate + 3 H(+). It participates in cofactor biosynthesis; riboflavin biosynthesis; 2-hydroxy-3-oxobutyl phosphate from D-ribulose 5-phosphate: step 1/1. It functions in the pathway cofactor biosynthesis; riboflavin biosynthesis; 5-amino-6-(D-ribitylamino)uracil from GTP: step 1/4. Functionally, catalyzes the conversion of D-ribulose 5-phosphate to formate and 3,4-dihydroxy-2-butanone 4-phosphate. In terms of biological role, catalyzes the conversion of GTP to 2,5-diamino-6-ribosylamino-4(3H)-pyrimidinone 5'-phosphate (DARP), formate and pyrophosphate. This is Riboflavin biosynthesis protein RibBA from Mycobacteroides abscessus (strain ATCC 19977 / DSM 44196 / CCUG 20993 / CIP 104536 / JCM 13569 / NCTC 13031 / TMC 1543 / L948) (Mycobacterium abscessus).